Consider the following 509-residue polypeptide: L-arabinose isomerase (509 aa).

E313, E340, H357, and H456 together coordinate Mn(2+).

It belongs to the arabinose isomerase family. Mn(2+) serves as cofactor.

The catalysed reaction is beta-L-arabinopyranose = L-ribulose. It functions in the pathway carbohydrate degradation; L-arabinose degradation via L-ribulose; D-xylulose 5-phosphate from L-arabinose (bacterial route): step 1/3. Functionally, catalyzes the conversion of L-arabinose to L-ribulose. In Bacteroides thetaiotaomicron (strain ATCC 29148 / DSM 2079 / JCM 5827 / CCUG 10774 / NCTC 10582 / VPI-5482 / E50), this protein is L-arabinose isomerase.